Here is a 359-residue protein sequence, read N- to C-terminus: Photosystem II protein D1 1 (359 aa).

The next 3 helical transmembrane spans lie at 29–46 (YVGW…AATI), 118–133 (HFLI…EWEL), and 142–156 (WICV…AASA). A chlorophyll a-binding site is contributed by His-118. Position 126 (Tyr-126) interacts with pheophytin a. The [CaMn4O5] cluster site is built by Asp-170 and Glu-189. The chain crosses the membrane as a helical span at residues 197-218 (FHMLGVAGVFGGSLFSAMHGSL). His-198 contacts chlorophyll a. A quinone contacts are provided by residues His-215 and 264-265 (SF). His-215 serves as a coordination point for Fe cation. His-272 is a Fe cation binding site. Residues 274–288 (FLAAWPVVGIWFTAL) traverse the membrane as a helical segment. [CaMn4O5] cluster contacts are provided by His-332, Glu-333, Asp-342, and Ala-344. Positions 345–359 (AAESTPVALQAPAIG) are excised as a propeptide.

The protein belongs to the reaction center PufL/M/PsbA/D family. As to quaternary structure, PSII is composed of 1 copy each of membrane proteins PsbA, PsbB, PsbC, PsbD, PsbE, PsbF, PsbH, PsbI, PsbJ, PsbK, PsbL, PsbM, PsbT, PsbX, PsbY, PsbZ, Psb30/Ycf12, peripheral proteins PsbO, CyanoQ (PsbQ), PsbU, PsbV and a large number of cofactors. It forms dimeric complexes. The cofactor is The D1/D2 heterodimer binds P680, chlorophylls that are the primary electron donor of PSII, and subsequent electron acceptors. It shares a non-heme iron and each subunit binds pheophytin, quinone, additional chlorophylls, carotenoids and lipids. D1 provides most of the ligands for the Mn4-Ca-O5 cluster of the oxygen-evolving complex (OEC). There is also a Cl(-1) ion associated with D1 and D2, which is required for oxygen evolution. The PSII complex binds additional chlorophylls, carotenoids and specific lipids.. In terms of processing, tyr-161 forms a radical intermediate that is referred to as redox-active TyrZ, YZ or Y-Z. C-terminally processed by CtpA; processing is essential to allow assembly of the oxygen-evolving complex and thus photosynthetic growth.

The protein resides in the cellular thylakoid membrane. It catalyses the reaction 2 a plastoquinone + 4 hnu + 2 H2O = 2 a plastoquinol + O2. Photosystem II (PSII) is a light-driven water:plastoquinone oxidoreductase that uses light energy to abstract electrons from H(2)O, generating O(2) and a proton gradient subsequently used for ATP formation. It consists of a core antenna complex that captures photons, and an electron transfer chain that converts photonic excitation into a charge separation. The D1/D2 (PsbA/PsbD) reaction center heterodimer binds P680, the primary electron donor of PSII as well as several subsequent electron acceptors. The polypeptide is Photosystem II protein D1 1 (Parasynechococcus marenigrum (strain WH8102)).